The chain runs to 338 residues: P2Y purinoceptor 14 (338 aa).

At 1–29 (MNNSTTTDPPNQPCSWNTLITKQIIPVLY) the chain is on the extracellular side. N-linked (GlcNAc...) asparagine glycosylation is found at Asn-2 and Asn-3. The chain crosses the membrane as a helical span at residues 30-50 (GMVFITGLLLNGISGWIFFYV). Topologically, residues 51–55 (PSSKS) are cytoplasmic. The chain crosses the membrane as a helical span at residues 56-76 (FIIYLKNIVVADFLMGLTFPF). Topologically, residues 77–96 (KVLGDSGLGPWQVNVFVCRV) are extracellular. Cys-94 and Cys-172 are oxidised to a cystine. A helical transmembrane segment spans residues 97–117 (SAVIFYVNMYVSIVFFGLISF). Residues 118–139 (DRYYKIVKPLLTSIVQSVNYSK) are Cytoplasmic-facing. Residues 140–160 (LLSVLVWMLMLLLAVPNIILT) form a helical membrane-spanning segment. Over 161–188 (NQGVKEVTKIQCMELKNELGRKWHKASN) the chain is Extracellular. The helical transmembrane segment at 189 to 209 (YIFVSIFWVVFLLLIVFYTAI) threads the bilayer. At 210–234 (TRKIFKSHLKSRKNSTSVKRKSSRN) the chain is on the cytoplasmic side. A helical transmembrane segment spans residues 235–255 (IFSIVLVFVVCFVPYHIARIP). Topologically, residues 256–278 (YTKSQTEGHYSCRTKETLLYAKE) are extracellular. A helical transmembrane segment spans residues 279–299 (FTLLLSAANVCLDPIIYFFLC). The Cytoplasmic portion of the chain corresponds to 300-338 (QPFREVLNKKLHMSLKVQNDLEVSKTKRENAIHESTDTL).

This sequence belongs to the G-protein coupled receptor 1 family.

It localises to the cell membrane. Functionally, receptor for UDP-glucose coupled to G-proteins. In Mus musculus (Mouse), this protein is P2Y purinoceptor 14 (P2ry14).